A 141-amino-acid chain; its full sequence is Large ribosomal subunit protein uL11 (141 aa).

The protein belongs to the universal ribosomal protein uL11 family. In terms of assembly, part of the ribosomal stalk of the 50S ribosomal subunit. Interacts with L10 and the large rRNA to form the base of the stalk. L10 forms an elongated spine to which L12 dimers bind in a sequential fashion forming a multimeric L10(L12)X complex. Post-translationally, one or more lysine residues are methylated.

Functionally, forms part of the ribosomal stalk which helps the ribosome interact with GTP-bound translation factors. The sequence is that of Large ribosomal subunit protein uL11 from Trichodesmium erythraeum (strain IMS101).